The chain runs to 331 residues: MLGIWTLLPLVLTSVVRLLSKCVNAQVTDISSKGFELRKIVTTIETQNLEGLHHEGQFCRNPCPPGERKARDCTVNEDEPDCVPCQEGKEYTDKGHFSSKCRRCRLCDEGHGLEVEINCTRTQNTKCRCKPNFFCNSAVCEHCDPCTKCEHGIIEECTLTSNTKCKEEDSRSDLPWLCLLLLLIPPIVYVVIKKACRKHRKENQGPHESTTLNPETAINLSDVDLSKYITTIAGAMTLSQVKDFVRKNGVSEAKIDEIKNDNVQDTAEQKVQLLRNWYQLHGKKDACDTLIKGLKTADLCTLAEKIHAVILKDITSDTENSNFRNEIQSLV.

An N-terminal signal peptide occupies residues 1–25 (MLGIWTLLPLVLTSVVRLLSKCVNA). At 26-171 (QVTDISSKGF…NTKCKEEDSR (146 aa)) the chain is on the extracellular side. TNFR-Cys repeat units follow at residues 47–83 (QNLEGLHHEGQFCRNPCPPGERKARDCTVNEDEPDCV), 84–127 (PCQE…NTKC), and 128–166 (RCKPNFFCNSAVCEHCDPCTKCEHGIIEECTLTSNTKCK). 8 disulfide bridges follow: Cys59/Cys73, Cys63/Cys82, Cys85/Cys101, Cys104/Cys119, Cys107/Cys127, Cys129/Cys143, Cys146/Cys157, and Cys149/Cys165. N-linked (GlcNAc...) asparagine glycosylation is present at Asn118. The helical transmembrane segment at 172–192 (SDLPWLCLLLLLIPPIVYVVI) threads the bilayer. The Cytoplasmic portion of the chain corresponds to 193-331 (KKACRKHRKE…NFRNEIQSLV (139 aa)). The S-palmitoyl cysteine moiety is linked to residue Cys196. Residues 209-313 (STTLNPETAI…EKIHAVILKD (105 aa)) are interaction with HIPK3. Thr211 bears the Phosphothreonine mark. A Phosphoserine modification is found at Ser221. Positions 226–250 (SKYITTIAGAMTLSQVKDFVRKNGV) are interaction with CALM. Positions 226 to 310 (SKYITTIAGA…TLAEKIHAVI (85 aa)) constitute a Death domain. Phosphothreonine is present on Thr318.

In terms of assembly, component of the death-induced signaling complex (DISC) composed of cell surface receptor FAS/CD95, adapter protein FADD and the CASP8 protease; recruitment of CASP8 to the complex is required for processing of CASP8 into the p18 and p10 subunits. Interacts directly (via DED domain) with NOL3 (via CARD domain); inhibits death-inducing signaling complex (DISC) assembly by inhibiting the increase in FAS-FADD binding induced by FAS activation. Binds DAXX. Interacts with HIPK3. Part of a complex containing HIPK3 and FADD. Binds RIPK1 and FAIM2. Interacts with BABAM2 and FEM1B. Interacts with CALM. In the absence of stimulation, interacts with BIRC2, DDX3X and GSK3B. The interaction with BIRC2 and DDX3X is further enhanced upon receptor stimulation and accompanied by DDX3X and BIRC2 cleavage. Palmitoylated. Palmitoylation by ZDHHC7 prevents the lysosomal degradation of FAS regulating its expression at the plasma membrane.

Its subcellular location is the cell membrane. It localises to the membrane raft. In terms of biological role, receptor for TNFSF6/FASLG. The adapter molecule FADD recruits caspase CASP8 to the activated receptor. The resulting death-inducing signaling complex (DISC) performs CASP8 proteolytic activation which initiates the subsequent cascade of caspases (aspartate-specific cysteine proteases) mediating apoptosis. FAS-mediated apoptosis may have a role in the induction of peripheral tolerance, in the antigen-stimulated suicide of mature T-cells, or both. The chain is Tumor necrosis factor receptor superfamily member 6 (FAS) from Macaca fascicularis (Crab-eating macaque).